Consider the following 295-residue polypeptide: Ribosomal protein L11 methyltransferase (295 aa).

Residues T138, G161, D183, and N230 each coordinate S-adenosyl-L-methionine.

It belongs to the methyltransferase superfamily. PrmA family.

Its subcellular location is the cytoplasm. The catalysed reaction is L-lysyl-[protein] + 3 S-adenosyl-L-methionine = N(6),N(6),N(6)-trimethyl-L-lysyl-[protein] + 3 S-adenosyl-L-homocysteine + 3 H(+). Functionally, methylates ribosomal protein L11. The protein is Ribosomal protein L11 methyltransferase of Bradyrhizobium diazoefficiens (strain JCM 10833 / BCRC 13528 / IAM 13628 / NBRC 14792 / USDA 110).